The following is a 22-amino-acid chain: Cysteine proteinase (22 aa).

Residues 1-22 (GADDSDWRKKGAVNVIXKDQGQ) are disordered.

Belongs to the peptidase C1 family.

The protein is Cysteine proteinase of Trichomonas vaginalis.